Reading from the N-terminus, the 377-residue chain is MGTTNGTDYGAYTYKELEREQYWPSENLKISITGAGGFIASHIARRLKHEGHYVIASDWKKNEHMTEDMFCDEFHLVDLRVMENCLKVTEGVDHVFNLAADMGGMGFIQSNHSVIMYNNTMISFNMIEAARINGIKRFFYASSACIYPEFKQLETTNVSLKESDAWPAEPQDAYGLEKLATEELCKHYNKDFGIECRIGRFHNIYGPFGTWKGGREKAPAAFCRKAQTSTDRFEMWGDGLQTRSFTFIDECVEGVLRLTKSDFREPVNIGSDEMVSMNEMAEMVLSFEEKKLPIHHIPGPEGVRGRNSDNNLIKEKLGWAPNMRLKEGLRITYFWIKEQIEKEKAKGSDVSLYGSSKVVGTQAPVQLGSLRAADGKE.

Gly-2 is subject to N-acetylglycine. Residues Gly-34–Lys-60, Asp-58, and Asp-78 contribute to the NAD(+) site. Residues Gly-103 and Ser-143–Cys-145 each bind substrate. NAD(+) is bound by residues Tyr-174 and Lys-178. Tyr-174 (proton acceptor) is an active-site residue. Residues Asn-203, Glu-216–Ala-218, Lys-225, Gln-241–Arg-243, Arg-306, and Ser-356 contribute to the substrate site. A Phosphoserine modification is found at Ser-369.

Belongs to the NAD(P)-dependent epimerase/dehydratase family. As to quaternary structure, homodimer. Interacts with chaperone Hsc70-3 protein, which may regulate epimerase activity. The cofactor is NAD(+).

The enzyme catalyses GDP-alpha-D-mannose = GDP-beta-L-gulose. It carries out the reaction GDP-beta-L-gulose = GDP-beta-L-galactose. It participates in cofactor biosynthesis; L-ascorbate biosynthesis via GDP-alpha-D-mannose pathway; L-ascorbate from GDP-alpha-D-mannose: step 1/5. Inhibited by GDP and GDP-D-glucose. Its function is as follows. Catalyzes a reversible epimerization of GDP-D-mannose that precedes the committed step in the biosynthesis of vitamin C (L-ascorbate), resulting in the hydrolysis of the highly energetic glycosyl-pyrophosphoryl linkage. Able to catalyze 2 distinct epimerization reactions and can release both GDP-L-galactose and GDP-L-gulose from GDP-mannose. The polypeptide is GDP-mannose 3,5-epimerase (Arabidopsis thaliana (Mouse-ear cress)).